Reading from the N-terminus, the 127-residue chain is Small ribosomal subunit protein uS11 (127 aa).

The protein belongs to the universal ribosomal protein uS11 family. Part of the 30S ribosomal subunit. Interacts with proteins S7 and S18. Binds to IF-3.

In terms of biological role, located on the platform of the 30S subunit, it bridges several disparate RNA helices of the 16S rRNA. Forms part of the Shine-Dalgarno cleft in the 70S ribosome. The chain is Small ribosomal subunit protein uS11 from Lactococcus lactis subsp. lactis (strain IL1403) (Streptococcus lactis).